Consider the following 352-residue polypeptide: Chorismate synthase (352 aa).

NADP(+) contacts are provided by arginine 48 and arginine 54. FMN-binding positions include 125 to 127 (RSS), 238 to 239 (NA), glycine 278, 293 to 297 (KPTSS), and arginine 319.

This sequence belongs to the chorismate synthase family. In terms of assembly, homotetramer. Requires FMNH2 as cofactor.

It carries out the reaction 5-O-(1-carboxyvinyl)-3-phosphoshikimate = chorismate + phosphate. Its pathway is metabolic intermediate biosynthesis; chorismate biosynthesis; chorismate from D-erythrose 4-phosphate and phosphoenolpyruvate: step 7/7. In terms of biological role, catalyzes the anti-1,4-elimination of the C-3 phosphate and the C-6 proR hydrogen from 5-enolpyruvylshikimate-3-phosphate (EPSP) to yield chorismate, which is the branch point compound that serves as the starting substrate for the three terminal pathways of aromatic amino acid biosynthesis. This reaction introduces a second double bond into the aromatic ring system. This is Chorismate synthase from Bordetella petrii (strain ATCC BAA-461 / DSM 12804 / CCUG 43448).